Reading from the N-terminus, the 468-residue chain is Zinc transporter SLC39A7 (468 aa).

A helical transmembrane segment spans residues 10–30; the sequence is WVAVGLLTWAALGLLVAGHEG. Composition is skewed to basic and acidic residues over residues 36–56 and 64–100; these read RDVE…DFHH and HTHE…DSLH. The interval 36 to 116 is disordered; that stretch reads RDVEEDFHGH…SHGASREAGA (81 aa). H64 bears the Pros-methylhistidine mark. 3 consecutive transmembrane segments (helical) span residues 132-152, 163-183, and 208-228; these read ALGA…LIPV, LQIL…LHLI, and GPIL…LVVE. Positions 237–248 are enriched in basic residues; it reads GHGHAHAHGHGH. Positions 237–313 are disordered; that stretch reads GHGHAHAHGH…NPEEEKTGSD (77 aa). The segment covering 249 to 312 has biased composition (basic and acidic residues); sequence SHGDSHAHGH…QNPEEEKTGS (64 aa). The next 3 membrane-spanning stretches (helical) occupy residues 385 to 405, 409 to 429, and 447 to 467; these read LTAI…GGAV, VAGG…FIYV, and SLLE…IAHL.

The protein belongs to the ZIP transporter (TC 2.A.5) family. KE4/Catsup subfamily. Homodimer. Rapidly phosphorylated by CK2 following Zn(2+) treatment. This phosphorylation is required for efficient cytosolic Zn(2+) release.

The protein resides in the endoplasmic reticulum membrane. It is found in the golgi apparatus. The protein localises to the cis-Golgi network membrane. The catalysed reaction is Zn(2+)(in) = Zn(2+)(out). Functionally, transports Zn(2+) from the endoplasmic reticulum (ER)/Golgi apparatus to the cytosol, playing an essential role in the regulation of cytosolic zinc levels. Acts as a gatekeeper of zinc release from intracellular stores, requiring post-translational activation by phosphorylation on residues, resulting in activation of multiple downstream pathways leading to cell growth and proliferation. Has an essential role in B cell development and is required for proper B cell receptor signaling. Plays an important role in maintaining intestinal epithelial homeostasis and skin dermis development by regulating ER function. Controls cell signaling pathways involved in glucose metabolism in skeletal muscle. Has a protective role against ER stress in different biological contexts. Mediates Zn(2+)-induced ferroptosis. This chain is Zinc transporter SLC39A7, found in Rattus norvegicus (Rat).